A 56-amino-acid polypeptide reads, in one-letter code: Large ribosomal subunit protein bL33 (56 aa).

Belongs to the bacterial ribosomal protein bL33 family.

This Rickettsia typhi (strain ATCC VR-144 / Wilmington) protein is Large ribosomal subunit protein bL33.